We begin with the raw amino-acid sequence, 550 residues long: Membrane protein insertase YidC (550 aa).

A helical transmembrane segment spans residues 3-23; the sequence is IKRTVLWVIFFMSAVMLFDNW. Residues 34 to 73 form a disordered region; the sequence is FPSATQTKTAAPAAPGSSTTASQPTDLPQTTAAAPGSTTP. A compositionally biased stretch (low complexity) spans 35-73; it reads PSATQTKTAAPAAPGSSTTASQPTDLPQTTAAAPGSTTP. The next 4 helical transmembrane spans lie at 363-383, 429-449, 472-492, and 503-523; these read WGWAIVLLTLLIKAVFFPLSA, FGGCLPVVIQIPVFISLYWVL, PYFILPVLMAVSMFVQTKLNP, and MMFMPIAFSVMFFFFPAGLVL.

The protein belongs to the OXA1/ALB3/YidC family. Type 1 subfamily. Interacts with the Sec translocase complex via SecD. Specifically interacts with transmembrane segments of nascent integral membrane proteins during membrane integration.

Its subcellular location is the cell inner membrane. Functionally, required for the insertion and/or proper folding and/or complex formation of integral membrane proteins into the membrane. Involved in integration of membrane proteins that insert both dependently and independently of the Sec translocase complex, as well as at least some lipoproteins. Aids folding of multispanning membrane proteins. The protein is Membrane protein insertase YidC of Paraburkholderia phymatum (strain DSM 17167 / CIP 108236 / LMG 21445 / STM815) (Burkholderia phymatum).